Consider the following 31-residue polypeptide: Palustrin-2a (31 aa).

Cys23 and Cys29 are disulfide-bonded.

As to expression, expressed by the skin glands.

The protein resides in the secreted. Functionally, antimicrobial activity against Gram-negative bacterium E.coli. This is Palustrin-2a from Lithobates palustris (Pickerel frog).